Consider the following 286-residue polypeptide: Transcription factor bHLH137 (286 aa).

Over residues 63 to 84 the composition is skewed to polar residues; sequence SGSEKLANTTKTATTGSSSCDQ. The tract at residues 63 to 149 is disordered; it reads SGSEKLANTT…RGQATDSHSL (87 aa). The 51-residue stretch at 142–192 folds into the bHLH domain; that stretch reads QATDSHSLAERVRREKISERMRTLQNLVPGCDKVTGKALMLDEIINYVQTL.

In terms of assembly, homodimer.

It localises to the nucleus. This is Transcription factor bHLH137 (BHLH137) from Arabidopsis thaliana (Mouse-ear cress).